Reading from the N-terminus, the 152-residue chain is Sec-independent protein translocase protein TatB (152 aa).

The helical transmembrane segment at 1–21 (MLDVGFGELFCFGIIALLVLG) threads the bilayer.

Belongs to the TatB family. In terms of assembly, the Tat system comprises two distinct complexes: a TatABC complex, containing multiple copies of TatA, TatB and TatC subunits, and a separate TatA complex, containing only TatA subunits. Substrates initially bind to the TatABC complex, which probably triggers association of the separate TatA complex to form the active translocon.

It is found in the cell inner membrane. In terms of biological role, part of the twin-arginine translocation (Tat) system that transports large folded proteins containing a characteristic twin-arginine motif in their signal peptide across membranes. Together with TatC, TatB is part of a receptor directly interacting with Tat signal peptides. TatB may form an oligomeric binding site that transiently accommodates folded Tat precursor proteins before their translocation. The chain is Sec-independent protein translocase protein TatB from Acinetobacter baylyi (strain ATCC 33305 / BD413 / ADP1).